Reading from the N-terminus, the 539-residue chain is Chaperonin GroEL (539 aa).

Residues 30-33 (TLGP), 87-91 (DGTTT), glycine 414, 479-481 (DAL), and aspartate 495 contribute to the ATP site.

It belongs to the chaperonin (HSP60) family. In terms of assembly, forms a cylinder of 14 subunits composed of two heptameric rings stacked back-to-back. Interacts with the co-chaperonin GroES.

Its subcellular location is the cytoplasm. The catalysed reaction is ATP + H2O + a folded polypeptide = ADP + phosphate + an unfolded polypeptide.. Its function is as follows. Together with its co-chaperonin GroES, plays an essential role in assisting protein folding. The GroEL-GroES system forms a nano-cage that allows encapsulation of the non-native substrate proteins and provides a physical environment optimized to promote and accelerate protein folding. The polypeptide is Chaperonin GroEL (Caldicellulosiruptor bescii (strain ATCC BAA-1888 / DSM 6725 / KCTC 15123 / Z-1320) (Anaerocellum thermophilum)).